A 64-amino-acid polypeptide reads, in one-letter code: Translational regulator CsrA (64 aa).

The protein belongs to the CsrA/RsmA family. Homodimer; the beta-strands of each monomer intercalate to form a hydrophobic core, while the alpha-helices form wings that extend away from the core.

It is found in the cytoplasm. A key translational regulator that binds mRNA to regulate translation initiation and/or mRNA stability. Mediates global changes in gene expression, shifting from rapid growth to stress survival by linking envelope stress, the stringent response and the catabolite repression systems. Usually binds in the 5'-UTR; binding at or near the Shine-Dalgarno sequence prevents ribosome-binding, repressing translation, binding elsewhere in the 5'-UTR can activate translation and/or stabilize the mRNA. Its function is antagonized by small RNA(s). This chain is Translational regulator CsrA, found in Thioalkalivibrio sulfidiphilus (strain HL-EbGR7).